Here is a 309-residue protein sequence, read N- to C-terminus: tRNA N6-adenosine threonylcarbamoyltransferase (309 aa).

Fe cation-binding residues include His-108 and His-112. Substrate-binding positions include 130-134 (LVSGG), Asp-163, Gly-176, Asp-180, and Asn-269. Asp-293 is a binding site for Fe cation.

Belongs to the KAE1 / TsaD family. It depends on Fe(2+) as a cofactor.

Its subcellular location is the cytoplasm. The enzyme catalyses L-threonylcarbamoyladenylate + adenosine(37) in tRNA = N(6)-L-threonylcarbamoyladenosine(37) in tRNA + AMP + H(+). Its function is as follows. Required for the formation of a threonylcarbamoyl group on adenosine at position 37 (t(6)A37) in tRNAs that read codons beginning with adenine. Is involved in the transfer of the threonylcarbamoyl moiety of threonylcarbamoyl-AMP (TC-AMP) to the N6 group of A37, together with TsaE and TsaB. TsaD likely plays a direct catalytic role in this reaction. In Mycoplasmopsis agalactiae (strain NCTC 10123 / CIP 59.7 / PG2) (Mycoplasma agalactiae), this protein is tRNA N6-adenosine threonylcarbamoyltransferase.